A 397-amino-acid chain; its full sequence is Enoyl-[acyl-carrier-protein] reductase [NADH] FabV (397 aa).

NAD(+) contacts are provided by residues 48–53 (GASTGY), 74–75 (FE), 111–112 (DA), and 139–140 (LA). Tyr-225 is a substrate binding site. The active-site Proton donor is the Tyr-235. NAD(+) contacts are provided by residues Lys-244 and 273 to 275 (VVT).

The protein belongs to the TER reductase family. Monomer.

It carries out the reaction a 2,3-saturated acyl-[ACP] + NAD(+) = a (2E)-enoyl-[ACP] + NADH + H(+). It functions in the pathway lipid metabolism; fatty acid biosynthesis. With respect to regulation, resistant to triclosan. Involved in the final reduction of the elongation cycle of fatty acid synthesis (FAS II). Catalyzes the NADH-dependent reduction of the carbon-carbon double bond in the enoyl moiety that is covalently linked to an acyl carrier protein (ACP). The protein is Enoyl-[acyl-carrier-protein] reductase [NADH] FabV of Aeromonas salmonicida (strain A449).